Consider the following 252-residue polypeptide: Indole-3-glycerol phosphate synthase (252 aa).

It belongs to the TrpC family.

It carries out the reaction 1-(2-carboxyphenylamino)-1-deoxy-D-ribulose 5-phosphate + H(+) = (1S,2R)-1-C-(indol-3-yl)glycerol 3-phosphate + CO2 + H2O. The protein operates within amino-acid biosynthesis; L-tryptophan biosynthesis; L-tryptophan from chorismate: step 4/5. The polypeptide is Indole-3-glycerol phosphate synthase (Listeria monocytogenes serotype 4b (strain CLIP80459)).